The following is a 298-amino-acid chain: Anamorsin homolog (298 aa).

The interval 1 to 143 is N-terminal SAM-like domain; that stretch reads MTQLIITYQS…IKAEKPSWKP (143 aa). Residues 143 to 162 are linker; the sequence is PEEGKVLVDDIDLEGSVPDI. Residues cysteine 175, cysteine 182, cysteine 185, and cysteine 187 each contribute to the [2Fe-2S] cluster site. The fe-S binding site A stretch occupies residues 175–187; that stretch reads CKSKERACNNCNC. [4Fe-4S] cluster-binding residues include cysteine 218, cysteine 221, cysteine 229, and cysteine 232. 2 short sequence motifs (cx2C motif) span residues 218–221 and 229–232; these read CGNC and CSGC. The tract at residues 218 to 232 is fe-S binding site B; the sequence is CGNCYLGDAFRCSGC.

This sequence belongs to the anamorsin family. Monomer. [2Fe-2S] cluster serves as cofactor. [4Fe-4S] cluster is required as a cofactor.

The protein localises to the cytoplasm. Its subcellular location is the mitochondrion intermembrane space. Functionally, component of the cytosolic iron-sulfur (Fe-S) protein assembly (CIA) machinery. Required for the maturation of extramitochondrial Fe-S proteins. Part of an electron transfer chain functioning in an early step of cytosolic Fe-S biogenesis, facilitating the de novo assembly of a [4Fe-4S] cluster on the cytosolic Fe-S scaffold complex. Electrons are transferred from NADPH via a FAD- and FMN-containing diflavin oxidoreductase. Together with the diflavin oxidoreductase, also required for the assembly of the diferric tyrosyl radical cofactor of ribonucleotide reductase (RNR), probably by providing electrons for reduction during radical cofactor maturation in the catalytic small subunit. The polypeptide is Anamorsin homolog (Cryptosporidium hominis).